The following is a 376-amino-acid chain: Partitioning defective 6 homolog gamma (376 aa).

One can recognise a PB1 domain in the interval 18 to 98; the sequence is AVEVKSKFGA…PLLRVFIQKR (81 aa). The interval 127 to 254 is interaction with PARD3 and CDC42; sequence RRRAHLDIGL…VTVKPANQRN (128 aa). Positions 134-151 constitute a Pseudo-CRIB domain; sequence IGLPRDFRPVSSIIDVDL. Residues 158–251 enclose the PDZ domain; sequence RVRLHRHGCE…NLIVTVKPAN (94 aa). The disordered stretch occupies residues 356-376; it reads PRHSLALPPGGVEEHGPAVTL. Over residues 367-376 the composition is skewed to basic and acidic residues; the sequence is VEEHGPAVTL.

It belongs to the PAR6 family. Interacts with PARD3. Interacts with GTP-bound forms of CDC42, RHOQ/TC10 and RAC1. Interacts with the N-terminal part of PRKCI and PRKCZ. Widely expressed, with a higher expression in fetal and adult kidney.

The protein localises to the cytoplasm. It is found in the cell membrane. Its subcellular location is the cell junction. The protein resides in the tight junction. Functionally, adapter protein involved in asymmetrical cell division and cell polarization processes. May play a role in the formation of epithelial tight junctions. The PARD6-PARD3 complex links GTP-bound Rho small GTPases to atypical protein kinase C proteins. The protein is Partitioning defective 6 homolog gamma (PARD6G) of Homo sapiens (Human).